Here is a 79-residue protein sequence, read N- to C-terminus: ATP synthase subunit c (79 aa).

The next 2 membrane-spanning stretches (helical) occupy residues 11-31 (IAVA…IGIL) and 53-73 (FFVV…LGLY).

Belongs to the ATPase C chain family. F-type ATPases have 2 components, F(1) - the catalytic core - and F(0) - the membrane proton channel. F(1) has five subunits: alpha(3), beta(3), gamma(1), delta(1), epsilon(1). F(0) has three main subunits: a(1), b(2) and c(10-14). The alpha and beta chains form an alternating ring which encloses part of the gamma chain. F(1) is attached to F(0) by a central stalk formed by the gamma and epsilon chains, while a peripheral stalk is formed by the delta and b chains.

The protein localises to the cell membrane. F(1)F(0) ATP synthase produces ATP from ADP in the presence of a proton or sodium gradient. F-type ATPases consist of two structural domains, F(1) containing the extramembraneous catalytic core and F(0) containing the membrane proton channel, linked together by a central stalk and a peripheral stalk. During catalysis, ATP synthesis in the catalytic domain of F(1) is coupled via a rotary mechanism of the central stalk subunits to proton translocation. Its function is as follows. Key component of the F(0) channel; it plays a direct role in translocation across the membrane. A homomeric c-ring of between 10-14 subunits forms the central stalk rotor element with the F(1) delta and epsilon subunits. In Buchnera aphidicola subsp. Schizaphis graminum (strain Sg), this protein is ATP synthase subunit c.